A 367-amino-acid chain; its full sequence is MSASLDDASVAPLVRKTAAWAWRFLVILAAMVALLWVLNKFEVIVVPVLLALMLSALLVPPVDWLDSRGLPHAVAVTLVLLSGFAVLGGILTFVVSQFIAGLPHLVTEVERSIDSARRWLIEGPAHLRGEQIDNAGNAAIEALRNNQAKLTSGALSTAATITELVTAAVLVLFTLIFFLYGGRSIWQYVTKAFPASVRDRVRAAGRAGYASLIGYARATFLVALTDAAGVGAGLAVMGVPLALPLASLVFFGAFIPLIGAVVAGFLAVVVALLAKGIGYALITVGLLIAVNQLEAHLLQPLVMGRAVSIHPLAVVLAIAAGGVLAGVVGALLAVPTVAFFNNAVQVLLGGNPFADVADVSSDHLTEV.

9 helical membrane passes run 18–38, 41–61, 74–94, 161–181, 228–248, 249–269, 270–290, 314–334, and 337–357; these read AAWA…LWVL, FEVI…LVPP, VAVT…LTFV, ITEL…FLYG, AGVG…LASL, VFFG…LAVV, VALL…LIAV, VVLA…LLAV, and VAFF…ADVA.

The protein belongs to the autoinducer-2 exporter (AI-2E) (TC 2.A.86) family.

It is found in the cell membrane. The sequence is that of Putative transport protein MT0215 from Mycobacterium tuberculosis (strain CDC 1551 / Oshkosh).